The primary structure comprises 215 residues: Ribosomal RNA small subunit methyltransferase G (215 aa).

S-adenosyl-L-methionine contacts are provided by residues G77, F82, 130–131 (IE), and R146.

It belongs to the methyltransferase superfamily. RNA methyltransferase RsmG family.

It is found in the cytoplasm. The catalysed reaction is guanosine(527) in 16S rRNA + S-adenosyl-L-methionine = N(7)-methylguanosine(527) in 16S rRNA + S-adenosyl-L-homocysteine. In terms of biological role, specifically methylates the N7 position of guanine in position 527 of 16S rRNA. The polypeptide is Ribosomal RNA small subunit methyltransferase G (Bartonella henselae (strain ATCC 49882 / DSM 28221 / CCUG 30454 / Houston 1) (Rochalimaea henselae)).